The following is a 202-amino-acid chain: Dephospho-CoA kinase (202 aa).

One can recognise a DPCK domain in the interval 6 to 202; that stretch reads KISVTGDPSS…QCFKALKGTI (197 aa). Position 14–19 (14–19) interacts with ATP; the sequence is SSGKTE.

The protein belongs to the CoaE family.

It is found in the cytoplasm. The catalysed reaction is 3'-dephospho-CoA + ATP = ADP + CoA + H(+). Its pathway is cofactor biosynthesis; coenzyme A biosynthesis; CoA from (R)-pantothenate: step 5/5. Its function is as follows. Catalyzes the phosphorylation of the 3'-hydroxyl group of dephosphocoenzyme A to form coenzyme A. This Chlamydia muridarum (strain MoPn / Nigg) protein is Dephospho-CoA kinase.